Consider the following 342-residue polypeptide: Fatty acid desaturase 6 (342 aa).

2 consecutive transmembrane segments (helical) span residues Gly-39–Leu-59 and Ser-63–Val-83. The Histidine box-1 signature appears at His-87–His-91. The short motif at His-124–His-128 is the Histidine box-2 element. The next 2 membrane-spanning stretches (helical) occupy residues Tyr-151 to Glu-171 and Leu-185 to Phe-205. Residues His-277–His-281 carry the Histidine box-3 motif.

It belongs to the fatty acid desaturase type 1 family.

The protein localises to the membrane. It functions in the pathway lipid metabolism; fatty acid metabolism. This is Fatty acid desaturase 6 (FADS6) from Bos taurus (Bovine).